The following is a 388-amino-acid chain: MSHCKFEQPRHGSLGFLPRKRASRQRGKVKAFPKDDASKPVHLTAFLGYKAGMTHIVRDLDRPGSKMHKREILEAVTIIETPPMVVVGVVGYVETPRGLRSLTTVWAEHLSEEVKRRFYKNWFKSKKKAFTKYAKKYAESTQSINRELERIKKYCSVVRVLAHTQIRKTPLAQKKAHLMEIQVNGGSVADKVEWAREHFEKTVDIKSTFEQNEMIDVIGVTRGKGNEGTTARWGTKRLPRKTHRGLRKVACIGAWHPANVQWTVARAGNAGYMHRTQLNSKIYRIGAGDDAKNASTDFDATEKRITPMGGFVRYGVVENDFVMLNGATPGPVKRVLTLRKSLLTHTSRKALEPVSLKWIDTASKFGHGRFQTPAEAKQFLGTLKKDVA.

Residues 1-10 show a composition bias toward basic and acidic residues; the sequence is MSHCKFEQPR. Residues 1–34 form a disordered region; that stretch reads MSHCKFEQPRHGSLGFLPRKRASRQRGKVKAFPK. Positions 18–31 are enriched in basic residues; sequence PRKRASRQRGKVKA.

It belongs to the universal ribosomal protein uL3 family. As to quaternary structure, component of the large ribosomal subunit (LSU). Mature yeast ribosomes consist of a small (40S) and a large (60S) subunit. The 40S small subunit contains 1 molecule of ribosomal RNA (18S rRNA) and at least 33 different proteins. The large 60S subunit contains 3 rRNA molecules (25S, 5.8S and 5S rRNA) and at least 46 different proteins. uL3 forms together with ES39L one of the contact sites for the signal recognition particle that targets ribosomes to the endoplasmic reticulum membrane.

Its subcellular location is the cytoplasm. Its function is as follows. Component of the ribosome, a large ribonucleoprotein complex responsible for the synthesis of proteins in the cell. The small ribosomal subunit (SSU) binds messenger RNAs (mRNAs) and translates the encoded message by selecting cognate aminoacyl-transfer RNA (tRNA) molecules. The large subunit (LSU) contains the ribosomal catalytic site termed the peptidyl transferase center (PTC), which catalyzes the formation of peptide bonds, thereby polymerizing the amino acids delivered by tRNAs into a polypeptide chain. The nascent polypeptides leave the ribosome through a tunnel in the LSU and interact with protein factors that function in enzymatic processing, targeting, and the membrane insertion of nascent chains at the exit of the ribosomal tunnel. uL3 plays a role in coordinating processes of accommodating the aminoacyl-tRNA in the PTC. This Schizosaccharomyces pombe (strain 972 / ATCC 24843) (Fission yeast) protein is Large ribosomal subunit protein uL3B (rpl302).